Here is a 566-residue protein sequence, read N- to C-terminus: Protein OBERON 1 (566 aa).

Polar residues predominate over residues 1 to 10 (MGTSSGSNLP). The disordered stretch occupies residues 1 to 79 (MGTSSGSNLP…KTGPDSHDQH (79 aa)). Residues 18–29 (QQLQTSLSLVSS) show a composition bias toward low complexity. Residues 47–60 (ESASSQETWPTSKS) show a composition bias toward polar residues. Basic and acidic residues predominate over residues 64–79 (RKTDSGKTGPDSHDQH). The PHD-type zinc finger occupies 225-289 (LCMCVICNKF…LFKCRACNHT (65 aa)). Residues 407 to 522 (EEKTRMYKKA…LFEKIKEQES (116 aa)) adopt a coiled-coil conformation. The disordered stretch occupies residues 545-566 (YNASSPRVDPRSNQRNPFRSNP). The segment covering 555–566 (RSNQRNPFRSNP) has biased composition (polar residues).

As to quaternary structure, self-interacts. Interacts with OBE2, OBE3 and OBE4. Binds to VPg of pea seed borne mosaic virus (PSbMV), turnip mosaic virus (TuMV) and lettuce mosaic virus (LMV), but not with VPg of tobacco etch virus (TEV), cowpea mosaic virus (CPMV), tomato black ring virus (TBRV) and grapevine fan leaf virus (GFLV). Interacts with RBL. As to expression, expressed in roots, seedlings, stems, leaves, flowers and siliques, especially in the vasculature.

The protein resides in the nucleus. It is found in the nucleoplasm. Its function is as follows. Probable transcription factor that acts together with OBE2 for the maintenance and/or establishment of both the shoot and root meristems, probably by controlling the expression of the meristem genes such as WUS, PLT1 and PLT2 and of genes required for auxin responses. Promotes cell meristematic activity via the WUSCHEL-CLAVATA pathway. Involved in the development of the basal pole and in auxin-mediated root and vascular development in the embryo. Confers sensitivity to turnip mosaic virus (TuMV) probably by promoting viral movement and multiplication via interaction with TuMV VPg. The polypeptide is Protein OBERON 1 (Arabidopsis thaliana (Mouse-ear cress)).